The sequence spans 339 residues: Protein H339R (339 aa).

It belongs to the asfivirus H339R family. In terms of assembly, interacts with NACA (alpha chain of nascent polypeptide-associated complex).

The protein resides in the host cytoplasm. It is found in the host nucleus. Its subcellular location is the virion. The sequence is that of Protein H339R from African swine fever virus (isolate Warthog/Namibia/Wart80/1980) (ASFV).